A 340-amino-acid chain; its full sequence is Small ribosomal subunit biogenesis GTPase RsgA (340 aa).

The segment covering 20–34 (ERAERAERRARRDDT) has biased composition (basic and acidic residues). Residues 20 to 42 (ERAERAERRARRDDTSLDAGDYG) form a disordered region. Positions 116-274 (RGQLKPVAAN…LIDSPGIREF (159 aa)) constitute a CP-type G domain. GTP-binding positions include 163–166 (NKTD) and 216–224 (GQSGVGKSS). Zn(2+) contacts are provided by Cys-298, Cys-303, His-305, and Cys-311.

This sequence belongs to the TRAFAC class YlqF/YawG GTPase family. RsgA subfamily. Monomer. Associates with 30S ribosomal subunit, binds 16S rRNA. Requires Zn(2+) as cofactor.

Its subcellular location is the cytoplasm. One of several proteins that assist in the late maturation steps of the functional core of the 30S ribosomal subunit. Helps release RbfA from mature subunits. May play a role in the assembly of ribosomal proteins into the subunit. Circularly permuted GTPase that catalyzes slow GTP hydrolysis, GTPase activity is stimulated by the 30S ribosomal subunit. This chain is Small ribosomal subunit biogenesis GTPase RsgA, found in Chromohalobacter salexigens (strain ATCC BAA-138 / DSM 3043 / CIP 106854 / NCIMB 13768 / 1H11).